The following is a 189-amino-acid chain: Peptidyl-tRNA hydrolase (189 aa).

Position 14 (Y14) interacts with tRNA. The Proton acceptor role is filled by H19. Positions 64, 66, and 112 each coordinate tRNA.

Belongs to the PTH family. In terms of assembly, monomer.

Its subcellular location is the cytoplasm. The catalysed reaction is an N-acyl-L-alpha-aminoacyl-tRNA + H2O = an N-acyl-L-amino acid + a tRNA + H(+). Functionally, hydrolyzes ribosome-free peptidyl-tRNAs (with 1 or more amino acids incorporated), which drop off the ribosome during protein synthesis, or as a result of ribosome stalling. In terms of biological role, catalyzes the release of premature peptidyl moieties from peptidyl-tRNA molecules trapped in stalled 50S ribosomal subunits, and thus maintains levels of free tRNAs and 50S ribosomes. This chain is Peptidyl-tRNA hydrolase, found in Erythrobacter litoralis (strain HTCC2594).